The following is a 338-amino-acid chain: Ketol-acid reductoisomerase (NADP(+)) (338 aa).

Residues 1 to 181 (MKVFYDKDCD…GGGRAGIIET (181 aa)) form the KARI N-terminal Rossmann domain. NADP(+) is bound by residues 24-27 (YGSQ), arginine 47, and serine 52. Histidine 107 is an active-site residue. Glycine 133 provides a ligand contact to NADP(+). Residues 182 to 327 (NFREETETDL…GKLRAMMPWI (146 aa)) form the KARI C-terminal knotted domain. Positions 190, 194, 226, and 230 each coordinate Mg(2+). Serine 251 contributes to the substrate binding site.

It belongs to the ketol-acid reductoisomerase family. Mg(2+) is required as a cofactor.

It carries out the reaction (2R)-2,3-dihydroxy-3-methylbutanoate + NADP(+) = (2S)-2-acetolactate + NADPH + H(+). It catalyses the reaction (2R,3R)-2,3-dihydroxy-3-methylpentanoate + NADP(+) = (S)-2-ethyl-2-hydroxy-3-oxobutanoate + NADPH + H(+). It participates in amino-acid biosynthesis; L-isoleucine biosynthesis; L-isoleucine from 2-oxobutanoate: step 2/4. It functions in the pathway amino-acid biosynthesis; L-valine biosynthesis; L-valine from pyruvate: step 2/4. Functionally, involved in the biosynthesis of branched-chain amino acids (BCAA). Catalyzes an alkyl-migration followed by a ketol-acid reduction of (S)-2-acetolactate (S2AL) to yield (R)-2,3-dihydroxy-isovalerate. In the isomerase reaction, S2AL is rearranged via a Mg-dependent methyl migration to produce 3-hydroxy-3-methyl-2-ketobutyrate (HMKB). In the reductase reaction, this 2-ketoacid undergoes a metal-dependent reduction by NADPH to yield (R)-2,3-dihydroxy-isovalerate. This is Ketol-acid reductoisomerase (NADP(+)) from Bordetella pertussis (strain Tohama I / ATCC BAA-589 / NCTC 13251).